A 146-amino-acid polypeptide reads, in one-letter code: Large ribosomal subunit protein uL15 (146 aa).

Residues 1–54 form a disordered region; the sequence is MKLHELRPAAGSKSAPKRVGRGTGSGLGRNAGKGEKGQNARSGGGVRPGFEGGQ. 2 stretches are compositionally biased toward gly residues: residues 21–31 and 42–52; these read RGTGSGLGRNA and SGGGVRPGFEG.

Belongs to the universal ribosomal protein uL15 family. As to quaternary structure, part of the 50S ribosomal subunit.

Functionally, binds to the 23S rRNA. The chain is Large ribosomal subunit protein uL15 from Clostridium perfringens (strain ATCC 13124 / DSM 756 / JCM 1290 / NCIMB 6125 / NCTC 8237 / Type A).